The sequence spans 295 residues: Phosphonoacetaldehyde hydrolase (295 aa).

Catalysis depends on Asp36, which acts as the Nucleophile. Residues Asp36 and Ala38 each contribute to the Mg(2+) site. Lys78 functions as the Schiff-base intermediate with substrate in the catalytic mechanism. Mg(2+) is bound at residue Asp212.

This sequence belongs to the HAD-like hydrolase superfamily. PhnX family. As to quaternary structure, homodimer. The cofactor is Mg(2+).

It carries out the reaction phosphonoacetaldehyde + H2O = acetaldehyde + phosphate + H(+). Involved in phosphonate degradation. In Psychromonas ingrahamii (strain DSM 17664 / CCUG 51855 / 37), this protein is Phosphonoacetaldehyde hydrolase.